A 94-amino-acid chain; its full sequence is Co-chaperonin GroES (94 aa).

It belongs to the GroES chaperonin family. In terms of assembly, heptamer of 7 subunits arranged in a ring. Interacts with the chaperonin GroEL.

Its subcellular location is the cytoplasm. Functionally, together with the chaperonin GroEL, plays an essential role in assisting protein folding. The GroEL-GroES system forms a nano-cage that allows encapsulation of the non-native substrate proteins and provides a physical environment optimized to promote and accelerate protein folding. GroES binds to the apical surface of the GroEL ring, thereby capping the opening of the GroEL channel. The chain is Co-chaperonin GroES from Streptococcus pneumoniae (strain 70585).